We begin with the raw amino-acid sequence, 176 residues long: dCTP deaminase (176 aa).

Residues 99–104 and Asp115 each bind dCTP; that span reads RSTLAR. The Proton donor/acceptor role is filled by Glu125. Gln163 lines the dCTP pocket.

Belongs to the dCTP deaminase family. As to quaternary structure, homotrimer.

The catalysed reaction is dCTP + H2O + H(+) = dUTP + NH4(+). Its pathway is pyrimidine metabolism; dUMP biosynthesis; dUMP from dCTP (dUTP route): step 1/2. Its function is as follows. Catalyzes the deamination of dCTP to dUTP. The polypeptide is dCTP deaminase (Pyrobaculum islandicum (strain DSM 4184 / JCM 9189 / GEO3)).